A 247-amino-acid polypeptide reads, in one-letter code: Ubiquinone biosynthesis O-methyltransferase (247 aa).

Arg-41, Gly-72, Asp-93, and Met-136 together coordinate S-adenosyl-L-methionine.

The protein belongs to the methyltransferase superfamily. UbiG/COQ3 family.

The enzyme catalyses a 3-demethylubiquinol + S-adenosyl-L-methionine = a ubiquinol + S-adenosyl-L-homocysteine + H(+). It catalyses the reaction a 3-(all-trans-polyprenyl)benzene-1,2-diol + S-adenosyl-L-methionine = a 2-methoxy-6-(all-trans-polyprenyl)phenol + S-adenosyl-L-homocysteine + H(+). Its pathway is cofactor biosynthesis; ubiquinone biosynthesis. O-methyltransferase that catalyzes the 2 O-methylation steps in the ubiquinone biosynthetic pathway. The protein is Ubiquinone biosynthesis O-methyltransferase of Bartonella tribocorum (strain CIP 105476 / IBS 506).